We begin with the raw amino-acid sequence, 785 residues long: Mitochondrial intermediate peptidase (785 aa).

Residues methionine 1 to leucine 43 constitute a mitochondrion transit peptide. Histidine 567 is a binding site for Zn(2+). Glutamate 568 is a catalytic residue. Histidine 571 and histidine 574 together coordinate Zn(2+).

The protein belongs to the peptidase M3 family. Requires Zn(2+) as cofactor.

The protein resides in the mitochondrion matrix. The enzyme catalyses Release of an N-terminal octapeptide as second stage of processing of some proteins imported into the mitochondrion.. Functionally, cleaves proteins, imported into the mitochondrion, to their mature size. While most mitochondrial precursor proteins are processed to the mature form in one step by mitochondrial processing peptidase (MPP), the sequential cleavage by MIP of an octapeptide after initial processing by MPP is a required step for a subgroup of nuclear-encoded precursor proteins destined for the matrix or the inner membrane. This Pleurotus djamor (Pink oyster mushroom) protein is Mitochondrial intermediate peptidase (OCT1).